The sequence spans 842 residues: ATP-binding cassette sub-family B member 6 (842 aa).

Residues Met1–Cys26 lie on the Lumenal side of the membrane. A required for the lysosomal targeting region spans residues Met1–Trp205. Residues Met1–Gln236 form a required for ATPase activity region. Asn6 is a glycosylation site (N-linked (GlcNAc...) asparagine). Cys8 and Cys26 are joined by a disulfide. A helical transmembrane segment spans residues Phe27 to Ala47. The Cytoplasmic segment spans residues Leu48–Pro72. The chain crosses the membrane as a helical span at residues Tyr73–Gly93. At Arg94–Tyr106 the chain is on the lumenal side. The chain crosses the membrane as a helical span at residues Leu107–Val127. Residues Glu128 to Ser147 lie on the Cytoplasmic side of the membrane. Residues Pro148–Trp168 form a helical membrane-spanning segment. Residues Asn169–Gln185 lie on the Lumenal side of the membrane. Residues Phe186 to Ala206 form a helical membrane-spanning segment. At Pro207–Leu263 the chain is on the cytoplasmic side. The helical transmembrane segment at Val264–Ile284 threads the bilayer. Positions Val265 to Thr556 constitute an ABC transmembrane type-1 domain. The Lumenal segment spans residues Phe285–Asn291. A helical transmembrane segment spans residues Leu292–Leu312. Residues Lys313 to Arg375 lie on the Cytoplasmic side of the membrane. A helical transmembrane segment spans residues Gly376–Ala396. Residue Asp397 is a topological domain, lumenal. A helical membrane pass occupies residues Ile398–Phe418. Topologically, residues Leu419–Gln499 are cytoplasmic. A helical transmembrane segment spans residues Thr500–Val520. At Thr521–Asp529 the chain is on the lumenal side. A helical transmembrane segment spans residues Tyr530–Tyr550. Residues Tyr551–Arg842 are Cytoplasmic-facing. An ABC transporter domain is found at Ile590–Leu824. Residues Tyr599 and Gly623–Arg634 contribute to the ATP site.

The protein belongs to the ABC transporter superfamily. ABCB family. Heavy Metal importer (TC 3.A.1.210) subfamily. Homodimer. In terms of processing, N-glycosylated. As to expression, widely expressed. High expression is detected in the retinal epithelium. Expressed in mature erythrocytes.

The protein localises to the cell membrane. It localises to the mitochondrion outer membrane. The protein resides in the endoplasmic reticulum membrane. Its subcellular location is the golgi apparatus membrane. It is found in the endosome membrane. The protein localises to the lysosome membrane. It localises to the late endosome membrane. The protein resides in the early endosome membrane. Its subcellular location is the secreted. It is found in the extracellular exosome. The protein localises to the mitochondrion. It localises to the endosome. The protein resides in the multivesicular body membrane. Its subcellular location is the melanosome membrane. It carries out the reaction heme b(in) + ATP + H2O = heme b(out) + ADP + phosphate + H(+). The enzyme catalyses coproporphyrin III(in) + ATP + H2O = coproporphyrin III(out) + ADP + phosphate + H(+). It catalyses the reaction pheophorbide a(in) + ATP + H2O = pheophorbide a(out) + ADP + phosphate + H(+). The catalysed reaction is coproporphyrinogen III(in) + ATP + H2O = coproporphyrinogen III(out) + ADP + phosphate + H(+). It carries out the reaction protoporphyrin IX(in) + ATP + H2O = protoporphyrin IX(out) + ADP + phosphate + H(+). The enzyme catalyses coproporphyrin I(in) + ATP + H2O = coproporphyrin I(out) + ADP + phosphate + H(+). It catalyses the reaction uroporphyrin I(in) + ATP + H2O = uroporphyrin I(out) + ADP + phosphate + H(+). The catalysed reaction is uroporphyrin III(in) + ATP + H2O = uroporphyrin III(out) + ADP + phosphate + H(+). Its activity is regulated as follows. ATPase activity is inhibited by MgATP with an IC(50) of 1.03 mM and up-regulated by coporphyrin III&gt; hemin &gt; protoporphyrin IX. ATPase activity for hemin is up-regulated by glutathione. The ATPase activity is impaired by increasing copper concentrations (0-300 uM). The ATPase activity is stimulated in presence of glutathione for increasing copper concentrations (0-300 uM). Functionally, ATP-dependent transporter that catalyzes the transport of a broad-spectrum of porphyrins from the cytoplasm to the extracellular space through the plasma membrane or into the vesicle lumen. May also function as an ATP-dependent importer of porphyrins from the cytoplasm into the mitochondria, in turn may participate in the de novo heme biosynthesis regulation and in the coordination of heme and iron homeostasis during phenylhydrazine stress. May also play a key role in the early steps of melanogenesis producing PMEL amyloid fibrils. In vitro, it confers to cells a resistance to toxic metal such as arsenic and cadmium and against chemotherapeutics agent such as 5-fluorouracil, SN-38 and vincristin. In addition may play a role in the transition metal homeostasis. This is ATP-binding cassette sub-family B member 6 from Homo sapiens (Human).